Consider the following 247-residue polypeptide: MSEKIAILSAYSFVNIEEPESLIPKLLFVGKRKYVKGTILLSKEGFNGSFSGSYESVNLVLEELKKLTNTKDVNVKINCSEIHPFQKLKVRLKKEIVAMNVDNLNVNLFKGEYIETKDWDEFITKQDVIVDTRNDYEVEVGTFKAAINPYTETFKQFPAWVEQNAELLKGKKIAMFCTGGIRCEKSTSLLKSMGHEEVYHLKGGILQYLEDTQNKNNLWQGECFVFDDRRAVADDLAPAEGYWLERK.

The Rhodanese domain occupies 123–217; the sequence is ITKQDVIVDT…YLEDTQNKNN (95 aa). The active-site Cysteine persulfide intermediate is the Cys177.

This sequence belongs to the TrhO family.

It carries out the reaction uridine(34) in tRNA + AH2 + O2 = 5-hydroxyuridine(34) in tRNA + A + H2O. Its function is as follows. Catalyzes oxygen-dependent 5-hydroxyuridine (ho5U) modification at position 34 in tRNAs. This is tRNA uridine(34) hydroxylase from Rickettsia bellii (strain RML369-C).